Here is a 487-residue protein sequence, read N- to C-terminus: MIPVVALVGRPNVGKSTLFNRLTRTRDALVADFPGLTRDRKYGRAFLSGYEFIVVDTGGIDGTEEGIETKMAEQSLAAIEEADVVLFMTDARAGLTAADLSIAQHLRSRQKTTFVVANKIDGIDADSACAEFWSLGLGEVYQMAAAQGRGVTNMIEYALTPYAEAMGIERQGEEEEVDERQYTEEEAEAEQKRLQDLPIKLAIIGKPNVGKSTLTNRILGEERVVVYDEPGTTRDSIYIPMERDGREYVIIDTAGVRRRSKVHEVIEKFSVIKTLKAVEDANVVLLIIDAREGVAEQDLGLLGFALNAGRALVIAVNKWDGIDQGIKDRVKSELDRRLGFIDFARIHFISALHGTGVGHLFESIEEAYDSATRRVSTSMLTRIMQMSQDDHQPPLVNGRRVKLKYAHAGGYNPPIVVIHGNQVSKLPDSYKRYMMNYFRRSLKVVGTPIQLRFQEGDNPFENKVEKLTMSQERRRKRALSHIKDRKK.

2 consecutive EngA-type G domains span residues Pro-3 to Met-166 and Ile-199 to Thr-372. Residues Gly-9 to Ser-16, Asp-56 to Ile-60, Asn-118 to Asp-121, Gly-205 to Ser-212, Asp-252 to Val-256, and Asn-317 to Asp-320 contribute to the GTP site. The 85-residue stretch at Arg-373–Asp-457 folds into the KH-like domain.

Belongs to the TRAFAC class TrmE-Era-EngA-EngB-Septin-like GTPase superfamily. EngA (Der) GTPase family. As to quaternary structure, associates with the 50S ribosomal subunit.

Its function is as follows. GTPase that plays an essential role in the late steps of ribosome biogenesis. The protein is GTPase Der of Shewanella oneidensis (strain ATCC 700550 / JCM 31522 / CIP 106686 / LMG 19005 / NCIMB 14063 / MR-1).